The primary structure comprises 285 residues: Complement C1q tumor necrosis factor-related protein 2 (285 aa).

The N-terminal stretch at 1-15 (MIPWVLLACALPCAA) is a signal peptide. The tract at residues 33–144 (QLVCSLPGPQ…PGLPGPCSCG (112 aa)) is disordered. One can recognise a Collagen-like domain in the interval 40 to 141 (GPQGPPGPPG…KGEPGLPGPC (102 aa)). The span at 41-51 (PQGPPGPPGAP) shows a compositional bias: pro residues. Positions 53 to 65 (PSGMMGRMGFPGK) are enriched in low complexity. The span at 66–78 (DGQDGHDGDRGDS) shows a compositional bias: basic and acidic residues. Over residues 84–120 (PGRTGNRGKPGPKGKAGAIGRAGPRGPKGVNGTPGKH) the composition is skewed to low complexity. The C1q domain maps to 145–281 (SGHTKSAFSV…GFLIYADQDD (137 aa)).

May interact with ERFE. In terms of tissue distribution, expressed in adipose tissue.

It is found in the secreted. Functionally, involved in the regulation of lipid metabolism in adipose tissue and liver. The protein is Complement C1q tumor necrosis factor-related protein 2 (C1QTNF2) of Homo sapiens (Human).